Here is a 515-residue protein sequence, read N- to C-terminus: Protein NRT1/ PTR FAMILY 4.1 (515 aa).

Transmembrane regions (helical) follow at residues 24–44 (GIKA…VFLA), 71–91 (FVGT…SFLT), 93–113 (FAAF…LTLQ), 134–154 (VLFT…GSLP), 168–188 (LISG…FLAV), 204–224 (FTIS…GCPM), 298–318 (FLAL…VAQM), 339–359 (IPVA…LALY), 381–401 (IGYG…VEVK), 413–433 (ISVF…MLTV), 461–481 (AMGF…TGWL), and 492–512 (LFYL…IFWA).

Belongs to the major facilitator superfamily. Proton-dependent oligopeptide transporter (POT/PTR) (TC 2.A.17) family. As to expression, expressed in siliques and flowers.

The protein resides in the membrane. In terms of biological role, involved in (+) and (-)-abscisic acid transport (ABA) and in gibberellin import. This is Protein NRT1/ PTR FAMILY 4.1 (NPF4.1) from Arabidopsis thaliana (Mouse-ear cress).